A 140-amino-acid polypeptide reads, in one-letter code: Nucleoside diphosphate kinase (140 aa).

Residues lysine 11, phenylalanine 59, arginine 87, threonine 93, arginine 104, and asparagine 114 each contribute to the ATP site. Histidine 117 serves as the catalytic Pros-phosphohistidine intermediate.

Belongs to the NDK family. Homotetramer. The cofactor is Mg(2+).

Its subcellular location is the cytoplasm. The catalysed reaction is a 2'-deoxyribonucleoside 5'-diphosphate + ATP = a 2'-deoxyribonucleoside 5'-triphosphate + ADP. It catalyses the reaction a ribonucleoside 5'-diphosphate + ATP = a ribonucleoside 5'-triphosphate + ADP. Its function is as follows. Major role in the synthesis of nucleoside triphosphates other than ATP. The ATP gamma phosphate is transferred to the NDP beta phosphate via a ping-pong mechanism, using a phosphorylated active-site intermediate. This Rhizorhabdus wittichii (strain DSM 6014 / CCUG 31198 / JCM 15750 / NBRC 105917 / EY 4224 / RW1) (Sphingomonas wittichii) protein is Nucleoside diphosphate kinase.